The chain runs to 175 residues: Alpha-crystallin B chain (175 aa).

The residue at position 1 (Met-1) is an N-acetylmethionine. Ser-19 bears the Phosphoserine mark. Ser-41 carries O-linked (GlcNAc) serine glycosylation. Residues Ser-45 and Ser-59 each carry the phosphoserine modification. The sHSP domain occupies 56–164 (RAPSWIDTGL…PERTIPITRE (109 aa)). A Zn(2+)-binding site is contributed by His-83. Lys-92 carries the N6-acetyllysine modification. 4 residues coordinate Zn(2+): His-104, Glu-106, His-111, and His-119. Residues 142–175 (VLTVNGPRKQASGPERTIPITREEKPAVTAAPKK) are disordered. Residue Lys-166 is modified to N6-acetyllysine. The O-linked (GlcNAc) threonine glycan is linked to Thr-170.

The protein belongs to the small heat shock protein (HSP20) family. Heteromer composed of three CRYAA and one CRYAB subunits. Aggregates with homologous proteins, including the small heat shock protein HSPB1, to form large heteromeric complexes. Inter-subunit bridging via zinc ions enhances stability, which is crucial as there is no protein turn over in the lens. Interacts with HSPBAP1 and TTN/titin. Interacts with TMEM109; in the cellular response to DNA damage. Interacts with DES; binds rapidly during early stages of DES filament assembly and a reduced binding seen in the later stages. Interacts with ATP6V1A and with MTOR, forming a ternary complex. In terms of tissue distribution, lens as well as other tissues.

Its subcellular location is the cytoplasm. The protein localises to the nucleus. The protein resides in the secreted. It is found in the lysosome. Its function is as follows. May contribute to the transparency and refractive index of the lens. Has chaperone-like activity, preventing aggregation of various proteins under a wide range of stress conditions. In lens epithelial cells, stabilizes the ATP6V1A protein, preventing its degradation by the proteasome. The sequence is that of Alpha-crystallin B chain (CRYAB) from Spalax judaei (Judean Mountains blind mole rat).